We begin with the raw amino-acid sequence, 142 residues long: Gonadotropin subunit beta-2 (142 aa).

Positions 1 to 24 are cleaved as a signal peptide; sequence MLGLHVGTLMISLFLCILLEPVEG. Cystine bridges form between C30–C78, C44–C93, C47–C131, C55–C109, C59–C111, and C114–C121. N34 carries an N-linked (GlcNAc...) asparagine glycan.

The protein belongs to the glycoprotein hormones subunit beta family. Heterodimer of an alpha and a beta chain.

Its subcellular location is the secreted. In terms of biological role, involved in gametogenesis and steroidogenesis. In Coregonus autumnalis (Arctic cisco), this protein is Gonadotropin subunit beta-2 (cgbb).